Consider the following 590-residue polypeptide: Asparagine synthetase [glutamine-hydrolyzing] (590 aa).

Cysteine 2 serves as the catalytic For GATase activity. Positions 2–185 (CGILAVLGCS…PGNLYSSRSG (184 aa)) constitute a Glutamine amidotransferase type-2 domain. L-glutamine-binding positions include 50 to 54 (RLAII), 75 to 77 (NGE), and aspartate 98. Residues 193–516 (PQWYNETIPS…PQNSARFTVP (324 aa)) form the Asparagine synthetase domain. Residues leucine 231, valine 267, and 341–342 (SG) contribute to the ATP site.

It carries out the reaction L-aspartate + L-glutamine + ATP + H2O = L-asparagine + L-glutamate + AMP + diphosphate + H(+). It functions in the pathway amino-acid biosynthesis; L-asparagine biosynthesis; L-asparagine from L-aspartate (L-Gln route): step 1/1. In Asparagus officinalis (Garden asparagus), this protein is Asparagine synthetase [glutamine-hydrolyzing].